The primary structure comprises 218 residues: Adenylate kinase (218 aa).

Position 10 to 15 (10 to 15) interacts with ATP; that stretch reads GAGKGT. Positions 30–59 are NMP; sequence STGDMLRAAVKAGSPLGLKVKEVMATGGLV. AMP contacts are provided by residues T31, R36, 57–59, 85–88, and Q92; these read GLV and GFPR. Residues 122–159 form an LID region; that stretch reads GRRVHEASGRVYHVDYNPPKVEGKDDVTGEPLVQREDD. Residues R123 and 132-133 each bind ATP; that span reads VY. Residues R156 and R167 each contribute to the AMP site. Residue G203 participates in ATP binding.

The protein belongs to the adenylate kinase family. As to quaternary structure, monomer.

It is found in the cytoplasm. The enzyme catalyses AMP + ATP = 2 ADP. It participates in purine metabolism; AMP biosynthesis via salvage pathway; AMP from ADP: step 1/1. In terms of biological role, catalyzes the reversible transfer of the terminal phosphate group between ATP and AMP. Plays an important role in cellular energy homeostasis and in adenine nucleotide metabolism. This chain is Adenylate kinase, found in Hahella chejuensis (strain KCTC 2396).